The sequence spans 324 residues: Mevalonate-3-kinase (324 aa).

Leucine 19 serves as a coordination point for substrate. Serine 109–serine 112 contributes to the ATP binding site. Positions 145 and 149 each coordinate substrate. Residues arginine 190 and serine 193 each contribute to the ATP site.

This sequence belongs to the GHMP kinase family. As to quaternary structure, homodimer.

It catalyses the reaction (R)-mevalonate + ATP = (R)-3-phosphomevalonate + ADP + H(+). It participates in isoprenoid biosynthesis; isopentenyl diphosphate biosynthesis via mevalonate pathway. Its function is as follows. Catalyzes the phosphorylation of mevalonate (MVA) to yield mevalonate-3-phosphate. Functions in an alternative mevalonate pathway, which passes through mevalonate 3-phosphate rather than mevalonate 5-phosphate. Also able to catalyze the formation of isobutene via the conversion of 3-hydroxyisovalerate (3-HIV) to an unstable 3-phosphate intermediate that undergoes a spontaneous decarboxylation. In Picrophilus torridus (strain ATCC 700027 / DSM 9790 / JCM 10055 / NBRC 100828 / KAW 2/3), this protein is Mevalonate-3-kinase.